Reading from the N-terminus, the 431-residue chain is Histidine--tRNA ligase (431 aa).

This sequence belongs to the class-II aminoacyl-tRNA synthetase family. In terms of assembly, homodimer.

The protein resides in the cytoplasm. It catalyses the reaction tRNA(His) + L-histidine + ATP = L-histidyl-tRNA(His) + AMP + diphosphate + H(+). The sequence is that of Histidine--tRNA ligase from Neisseria meningitidis serogroup C / serotype 2a (strain ATCC 700532 / DSM 15464 / FAM18).